The primary structure comprises 281 residues: sn-glycerol-3-phosphate transport system permease protein UgpE (281 aa).

Transmembrane regions (helical) follow at residues 16 to 36 (LILG…AATL), 85 to 105 (FSIT…IVWF), 113 to 133 (FFWM…FPTV), 142 to 162 (LDSY…TFLF), 202 to 222 (ALFV…LLII), and 247 to 267 (WNSV…IVLV). An ABC transmembrane type-1 domain is found at 77–268 (LLNSFVMAFS…IPPVVIVLVM (192 aa)).

The protein belongs to the binding-protein-dependent transport system permease family. UgpAE subfamily. In terms of assembly, the complex is composed of two ATP-binding proteins (UgpC), two transmembrane proteins (UgpA and UgpE) and a solute-binding protein (UgpB).

The protein resides in the cell inner membrane. In terms of biological role, part of the ABC transporter complex UgpBAEC involved in sn-glycerol-3-phosphate (G3P) import. Probably responsible for the translocation of the substrate across the membrane. The chain is sn-glycerol-3-phosphate transport system permease protein UgpE (ugpE) from Escherichia coli O157:H7.